The chain runs to 142 residues: Transcriptional regulator MraZ (142 aa).

2 SpoVT-AbrB domains span residues 5–47 (THTP…PTET) and 76–119 (ASDT…DATE).

The protein belongs to the MraZ family. As to quaternary structure, forms oligomers.

It localises to the cytoplasm. The protein resides in the nucleoid. The sequence is that of Transcriptional regulator MraZ from Cutibacterium acnes (strain DSM 16379 / KPA171202) (Propionibacterium acnes).